The chain runs to 245 residues: Neurovirulence factor ICP34.5 (245 aa).

Positions 1 to 15 (MARRRRRHRGPRRPR) are enriched in basic residues. A required for nucleolar localization region spans residues 1–17 (MARRRRRHRGPRRPRPP). Disordered stretches follow at residues 1 to 122 (MARR…PFRL) and 143 to 172 (RRAG…PATP). The span at 25-36 (TAQSQVTSTPNS) shows a compositional bias: polar residues. Residues 67 to 77 (ASDDDDDDDWP) are compositionally biased toward acidic residues. Pro residues-rich tracts occupy residues 78–87 (DSPPPEPAPE) and 113–122 (SHPPSRPFRL). A Nuclear export signal motif is present at residues 122–131 (LPPRLALRLR). 6 consecutive repeat copies span residues 155–157 (ATP), 158–160 (ATP), 161–163 (ATP), 164–166 (ATP), 167–169 (ATP), and 170–172 (ATP). The segment at 155-172 (ATPATPATPATPATPATP) is 6 X 3 AA tandem repeats of A-T-P. A compositionally biased stretch (low complexity) spans 158–172 (ATPATPATPATPATP). Positions 172 to 185 (PARVRFSPHVRVRH) are binding to PP1CA. An interaction with host PPP1CA region spans residues 172–185 (PARVRFSPHVRVRH). The tract at residues 187–245 (VVWASAARLARRGSWARERADRARFRRRVAEAEAVIGPCLGPEARARALARGAGPANSV) is important for interferon resistance. The Bipartite nuclear localization signal signature appears at 197-215 (RRGSWARERADRARFRRRV). Positions 215–230 (VAEAEAVIGPCLGPEA) are interaction with host EIF2S1/EIF-2ALPHA.

This sequence belongs to the PPP1R15 family. In terms of assembly, interacts with host PPP1CA to form a high-molecular-weight complex that dephosphorylates EIF2S1/eIF-2alpha. Interacts with host EIF2S1/eIF-2alpha; this interaction is crucial for the specific dephosphorylation of EIF2S1/eIF-2alpha by PPP1CA. Binds to proliferating cell nuclear antigen (PCNA), which may release host cells from growth arrest and facilitate viral replication. Interacts (via N-terminus) with host C1QBP and PRKCA. Interacts with protein UL31. Interacts with host TBK1. Interacts with host STING/TMEM173; this interaction inhibits the intracellular DNA sensing pathway. Interacts with host BECN1; this interaction modulates host autophagy.

The protein localises to the host cytoplasm. It is found in the host nucleus. It localises to the host nucleolus. Its subcellular location is the virion. In terms of biological role, inhibits the establishment of the immune response and of the integrated stress response (ISR) in the infected cell. Plays essential roles in viral nuclear egress to mediate capsid transit across the nuclear membrane. Facilitates nuclear egress cooperatively with host C1QBP and protein kinase C/PKC to induce lamin A/C phosphorylation and subsequent reorganization. In turn, lamina disassembles and nuclear egress occurs. Recruits the serine/threonine protein phosphatase PPP1CA/PP1-alpha to dephosphorylate the translation initiation factor EIF2S1/eIF-2alpha, thereby couteracting the host shutoff of protein synthesis involving double-stranded RNA-dependent protein kinase EIF2AK2/PKR. In turn, controls host IRF3 activation and subsequently inhibits host interferon response. Controls the DNA sensing pathway by interacting with and inhibiting host STING/TMEM173. Also down-modulates the host MHC class II proteins cell surface expression. Acts as a neurovirulence factor that has a profound effect on the growth of the virus in central nervous system tissue, by interacting with host BECN1 and thereby antagonizing the host autophagy response. This chain is Neurovirulence factor ICP34.5 (RL1), found in Homo sapiens (Human).